The following is a 365-amino-acid chain: Probable 7-methylxanthine methyltransferase 3 (365 aa).

Tyrosine 18 provides a ligand contact to S-adenosyl-L-homocysteine. Threonine 25 provides a ligand contact to theobromine. S-adenosyl-L-homocysteine-binding residues include cysteine 62, glutamine 67, aspartate 99, leucine 100, serine 132, and phenylalanine 133. 3 residues coordinate theobromine: tyrosine 150, histidine 153, and tryptophan 154. Asparagine 170, phenylalanine 258, and asparagine 259 together coordinate Mg(2+). Residue phenylalanine 311 coordinates theobromine.

Belongs to the methyltransferase superfamily. Type-7 methyltransferase family. Mg(2+) is required as a cofactor.

The enzyme catalyses 7-methylxanthine + S-adenosyl-L-methionine = theobromine + S-adenosyl-L-homocysteine + H(+). It functions in the pathway alkaloid biosynthesis. Functionally, involved in the biosynthesis of theobromine. This is Probable 7-methylxanthine methyltransferase 3 from Theobroma cacao (Cacao).